The primary structure comprises 501 residues: Zinc finger protein PLAG1 (501 aa).

The disordered stretch occupies residues 1-30 (MATVIPGDLSEVRDTQKVPSGKRKRGETKP). The short motif at 22–25 (KRKR) is the Nuclear localization signal element. 7 C2H2-type zinc fingers span residues 34–56 (FPCQ…SYSH), 62–86 (YKCT…MATH), 92–114 (HKCN…LHTH), 121–143 (FKCE…LALH), 150–172 (LTCK…LKTH), 185–207 (HQCE…MVVH), and 213–236 (FLCQ…KKSH). Low complexity-rich tracts occupy residues 366-380 (SGMP…ASSS) and 455-467 (TQLP…PQDP). 2 disordered regions span residues 366-406 (SGMP…GSVP) and 447-474 (QEEA…IGLG).

It belongs to the krueppel C2H2-type zinc-finger protein family. Expressed in nephroblastoma.

It localises to the nucleus. In terms of biological role, transcription factor and proto-oncogene whose activation results in up-regulation of target genes, such as IGFII, leading to uncontrolled cell proliferation. This is Zinc finger protein PLAG1 (PLAG1) from Gallus gallus (Chicken).